The sequence spans 336 residues: NAC domain-containing protein 100 (336 aa).

In terms of domain architecture, NAC spans Leu-16–Lys-166. A DNA-binding region spans residues Val-113–Lys-172. The tract at residues Arg-313 to Tyr-336 is disordered.

It is found in the nucleus. Binds to the promoter regions of genes involved in chlorophyll catabolic processes, such as NYC1, SGR1, SGR2 and PAO. The polypeptide is NAC domain-containing protein 100 (Arabidopsis thaliana (Mouse-ear cress)).